Here is a 942-residue protein sequence, read N- to C-terminus: Valine--tRNA ligase (942 aa).

The 'HIGH' region motif lies at proline 43–histidine 53. The 'KMSKS' region motif lies at lysine 551 to serine 555. Lysine 554 lines the ATP pocket. Positions glutamate 876 to leucine 942 form a coiled coil.

This sequence belongs to the class-I aminoacyl-tRNA synthetase family. ValS type 1 subfamily. Monomer.

Its subcellular location is the cytoplasm. It catalyses the reaction tRNA(Val) + L-valine + ATP = L-valyl-tRNA(Val) + AMP + diphosphate. Its function is as follows. Catalyzes the attachment of valine to tRNA(Val). As ValRS can inadvertently accommodate and process structurally similar amino acids such as threonine, to avoid such errors, it has a 'posttransfer' editing activity that hydrolyzes mischarged Thr-tRNA(Val) in a tRNA-dependent manner. This is Valine--tRNA ligase from Stenotrophomonas maltophilia (strain R551-3).